Here is an 87-residue protein sequence, read N- to C-terminus: RNA-binding protein Hfq (87 aa).

One can recognise a Sm domain in the interval 9-68; the sequence is DPFLNTLRRERIPVSIYLVNGIKLQGYIESFDQFVILLKNSISQMIYKHAISTVVPNHTN. Positions 66–87 are disordered; the sequence is HTNNQEHNQSQYNNNNACISKP.

Belongs to the Hfq family. Homohexamer.

Its function is as follows. RNA chaperone that binds small regulatory RNA (sRNAs) and mRNAs to facilitate mRNA translational regulation in response to envelope stress, environmental stress and changes in metabolite concentrations. Also binds with high specificity to tRNAs. The sequence is that of RNA-binding protein Hfq from Wigglesworthia glossinidia brevipalpis.